A 469-amino-acid polypeptide reads, in one-letter code: Argininosuccinate lyase (469 aa).

This sequence belongs to the lyase 1 family. Argininosuccinate lyase subfamily.

Its subcellular location is the cytoplasm. It catalyses the reaction 2-(N(omega)-L-arginino)succinate = fumarate + L-arginine. The protein operates within amino-acid biosynthesis; L-arginine biosynthesis; L-arginine from L-ornithine and carbamoyl phosphate: step 3/3. The protein is Argininosuccinate lyase of Burkholderia thailandensis (strain ATCC 700388 / DSM 13276 / CCUG 48851 / CIP 106301 / E264).